Here is a 251-residue protein sequence, read N- to C-terminus: Small ribosomal subunit protein uS2 (251 aa).

It belongs to the universal ribosomal protein uS2 family.

The protein is Small ribosomal subunit protein uS2 of Aromatoleum aromaticum (strain DSM 19018 / LMG 30748 / EbN1) (Azoarcus sp. (strain EbN1)).